The sequence spans 333 residues: Adenosine deaminase (333 aa).

Zn(2+) is bound by residues His12 and His14. The substrate site is built by His14, Asp16, and Gly170. His197 lines the Zn(2+) pocket. Catalysis depends on Glu200, which acts as the Proton donor. Asp278 lines the Zn(2+) pocket. Asp279 is a substrate binding site.

It belongs to the metallo-dependent hydrolases superfamily. Adenosine and AMP deaminases family. Adenosine deaminase subfamily. Zn(2+) serves as cofactor.

The enzyme catalyses adenosine + H2O + H(+) = inosine + NH4(+). It carries out the reaction 2'-deoxyadenosine + H2O + H(+) = 2'-deoxyinosine + NH4(+). Catalyzes the hydrolytic deamination of adenosine and 2-deoxyadenosine. This chain is Adenosine deaminase, found in Shigella boydii serotype 4 (strain Sb227).